A 175-amino-acid chain; its full sequence is Hypoxanthine-guanine phosphoribosyltransferase (175 aa).

2 residues coordinate diphosphate: Lys40 and Gly41. Mg(2+) contacts are provided by Glu96 and Asp97. The Proton acceptor role is filled by Asp100. GMP is bound by residues Lys128, 149-150 (FL), and Asp156. Arg162 serves as a coordination point for diphosphate.

It belongs to the purine/pyrimidine phosphoribosyltransferase family. Mg(2+) serves as cofactor.

The protein resides in the cytoplasm. It catalyses the reaction IMP + diphosphate = hypoxanthine + 5-phospho-alpha-D-ribose 1-diphosphate. The enzyme catalyses GMP + diphosphate = guanine + 5-phospho-alpha-D-ribose 1-diphosphate. It functions in the pathway purine metabolism; IMP biosynthesis via salvage pathway; IMP from hypoxanthine: step 1/1. The protein operates within purine metabolism; GMP biosynthesis via salvage pathway; GMP from guanine: step 1/1. Functionally, purine salvage pathway enzyme that catalyzes the transfer of the ribosyl-5-phosphate group from 5-phospho-alpha-D-ribose 1-diphosphate (PRPP) to the N9 position of the 6-oxopurines hypoxanthine and guanine to form the corresponding ribonucleotides IMP (inosine 5'-monophosphate) and GMP (guanosine 5'-monophosphate), with the release of PPi. In Mycoplasma pneumoniae (strain ATCC 29342 / M129 / Subtype 1) (Mycoplasmoides pneumoniae), this protein is Hypoxanthine-guanine phosphoribosyltransferase (hpt).